A 175-amino-acid chain; its full sequence is Co-chaperone protein HscB homolog (175 aa).

The J domain maps to S7–L79.

This sequence belongs to the HscB family. In terms of assembly, interacts with HscA and stimulates its ATPase activity.

Functionally, co-chaperone involved in the maturation of iron-sulfur cluster-containing proteins. Seems to help targeting proteins to be folded toward HscA. This chain is Co-chaperone protein HscB homolog, found in Paraburkholderia xenovorans (strain LB400).